The sequence spans 783 residues: Flavin carrier protein 2 (783 aa).

The first 22 residues, 1–22, serve as a signal peptide directing secretion; it reads MIFLNTFARCLLTCFVLCSGTA. Over 23–182 the chain is Lumenal; it reads RSSDTNDTTP…NGKTVQTKYA (160 aa). N-linked (GlcNAc...) asparagine glycosylation is found at asparagine 28, asparagine 65, asparagine 81, and asparagine 156. A helical membrane pass occupies residues 183–203; the sequence is AWPIAAISGVGVLTSGFVSVI. Residues 204–211 lie on the Cytoplasmic side of the membrane; that stretch reads GYSATAAH. A helical transmembrane segment spans residues 212–232; sequence IASNSISLFIYFQNLAITAMM. The Lumenal portion of the chain corresponds to 233–347; sequence GVSRVPPIAA…AYLANIELSN (115 aa). N-linked (GlcNAc...) asparagine glycosylation occurs at asparagine 323. Residues 348–368 form a helical membrane-spanning segment; it reads FFLTGIVFFLFFLFVVVVSLI. Residues 369 to 402 are Cytoplasmic-facing; it reads FFKALLEVLTRARILKETSNFFQYRKNWGSIIKG. Residues 403–423 form a helical membrane-spanning segment; sequence TLFRLSIIAFPQVSLLAIWEF. The Lumenal portion of the chain corresponds to 424 to 430; sequence TQVNSPA. Residues 431 to 451 traverse the membrane as a helical segment; the sequence is IVVDAVVILLIITGLLVYGTI. The Cytoplasmic portion of the chain corresponds to 452-492; it reads RVFIKGRESLRLYKNPAYLLYSDTYFLNKFGFLYVQFKADK. The chain crosses the membrane as a helical span at residues 493-513; it reads FWWLLPLLSYAFLRSLFVAVL. The Lumenal segment spans residues 514 to 521; that stretch reads QNQGKAQA. The chain crosses the membrane as a helical span at residues 522–542; that stretch reads MIIFVIELAYFVCLCWIRPYL. Topologically, residues 543–547 are cytoplasmic; the sequence is DKRTN. A helical membrane pass occupies residues 548–568; sequence VFNIAIHLVNLINAFFFLFFS. The Lumenal segment spans residues 569–581; that stretch reads NLFKQPAVVSSVM. A helical membrane pass occupies residues 582 to 602; sequence AVILFVLNAVFALFLLLFTIV. Over 603–783 the chain is Cytoplasmic; it reads TCTLALLHRN…ENARNNNPYL (181 aa). Positions 681–783 are disordered; it reads RLFDDETSSS…ENARNNNPYL (103 aa). Positions 688–697 are enriched in low complexity; it reads SSSSFKQNSS. Polar residues-rich tracts occupy residues 704-748 and 756-767; these read VTEQ…TSSL and YLGNSNKSYSHF. Residues 768-783 show a composition bias toward low complexity; the sequence is NNNGSNENARNNNPYL.

This sequence belongs to the transient receptor potential (TRP) ion channel family.

The protein localises to the endoplasmic reticulum membrane. Its function is as follows. May be responsible for the transport of FAD into the endoplasmic reticulum lumen, where it is required for oxidative protein folding. This Saccharomyces cerevisiae (strain ATCC 204508 / S288c) (Baker's yeast) protein is Flavin carrier protein 2 (FLC2).